A 512-amino-acid chain; its full sequence is rRNA N(6)-adenosine-methyltransferase ZCCHC4 (512 aa).

Zn(2+) is bound by residues Cys-39, His-41, Cys-63, Cys-72, Cys-124, Cys-127, His-139, and His-142. The GRF-type zinc finger occupies 39–81 (CPHGPTLLFVKVNQGKEETRKFYACSACRDRKDCNFFQWEDEK). Residues 171-174 (QYLF), Arg-201, Asp-223, 241-242 (NM), and Asp-274 contribute to the S-adenosyl-L-methionine site. Residues 335 to 355 (QVDYDNHALYKHGKTGRKQSP) form a regulatory loop region. Positions 378, 381, 391, 392, 395, 398, 408, 409, 412, 415, 422, 423, 426, 429, 434, and 436 each coordinate Zn(2+). Residues 393 to 445 (VHCNSCTSKDGRKWSHCFLCKKCVKPSWIHCNTCNRCALPDHSCLGPKDGCFI) enclose the DHHC domain. The CCHC-type zinc finger occupies 441–458 (DGCFICGALDHKRSNCPN).

This sequence belongs to the ZCCHC4 family. As to quaternary structure, interacts with components of the ASC-1 complex TRIP4, ASCC1, ASCC2 and ASCC3. Interact with AHCYL1 and AHCYL2. Interact with YTHDC2.

The protein localises to the cytoplasm. Its subcellular location is the nucleus. It localises to the nucleolus. The enzyme catalyses adenosine(4220) in 28S rRNA + S-adenosyl-L-methionine = N(6)-methyladenosine(4220) in 28S rRNA + S-adenosyl-L-homocysteine + H(+). Its function is as follows. rRNA N6-methyltransferase that specifically methylates the adenine in position 4220 of 28S rRNA. N6-methylation of adenine(4220) in 28S rRNA is required for translation. The sequence is that of rRNA N(6)-adenosine-methyltransferase ZCCHC4 from Mus musculus (Mouse).